The following is a 126-amino-acid chain: Aspartate 1-decarboxylase (126 aa).

Serine 25 functions as the Schiff-base intermediate with substrate; via pyruvic acid in the catalytic mechanism. Serine 25 is subject to Pyruvic acid (Ser). A substrate-binding site is contributed by threonine 57. The Proton donor role is filled by tyrosine 58. 73-75 (GAA) contributes to the substrate binding site.

This sequence belongs to the PanD family. Heterooctamer of four alpha and four beta subunits. The cofactor is pyruvate. In terms of processing, is synthesized initially as an inactive proenzyme, which is activated by self-cleavage at a specific serine bond to produce a beta-subunit with a hydroxyl group at its C-terminus and an alpha-subunit with a pyruvoyl group at its N-terminus.

It localises to the cytoplasm. It catalyses the reaction L-aspartate + H(+) = beta-alanine + CO2. The protein operates within cofactor biosynthesis; (R)-pantothenate biosynthesis; beta-alanine from L-aspartate: step 1/1. Functionally, catalyzes the pyruvoyl-dependent decarboxylation of aspartate to produce beta-alanine. This is Aspartate 1-decarboxylase from Proteus mirabilis (strain HI4320).